Here is a 769-residue protein sequence, read N- to C-terminus: Zinc finger protein 585B (769 aa).

The span at 1 to 12 (MPASWTSPQKSS) shows a compositional bias: polar residues. A disordered region spans residues 1–23 (MPASWTSPQKSSALAPDDHGSSY). One can recognise a KRAB domain in the interval 27 to 97 (VSFRDVVINF…QGERPRHSCP (71 aa)). 21 consecutive C2H2-type zinc fingers follow at residues 158-180 (YVCI…QKAH), 186-208 (YKCN…QRIH), 214-236 (YQCS…EKIH), 242-264 (HECT…QKIH), 270-292 (YICI…RRIH), 298-320 (YECN…QRIH), 354-376 (SICT…QRIH), 382-404 (YACS…QRIH), 410-432 (YVCM…QIIH), 438-460 (YKCG…KRIH), 466-488 (YVCN…QKTH), 494-516 (YICS…QRIH), 522-544 (YECN…QKIH), 550-572 (YECH…QKIH), 578-600 (YVCT…QRIH), 606-628 (YECS…QPLH), 634-656 (YVCA…QKTH), 662-684 (YICS…HRIH), 690-712 (YECS…QRIH), 718-740 (YVCA…QTTH), and 746-768 (YKCG…QGSH).

Belongs to the krueppel C2H2-type zinc-finger protein family.

The protein resides in the nucleus. Functionally, may be involved in transcriptional regulation. The chain is Zinc finger protein 585B (ZNF585B) from Pongo abelii (Sumatran orangutan).